Here is a 161-residue protein sequence, read N- to C-terminus: Large ribosomal subunit protein eL21 (161 aa).

The protein belongs to the eukaryotic ribosomal protein eL21 family.

This Caenorhabditis elegans protein is Large ribosomal subunit protein eL21 (rpl-21).